Reading from the N-terminus, the 381-residue chain is UDP-4-amino-4-deoxy-L-arabinose--oxoglutarate aminotransferase (381 aa).

Residue Lys-182 is modified to N6-(pyridoxal phosphate)lysine.

This sequence belongs to the DegT/DnrJ/EryC1 family. ArnB subfamily. As to quaternary structure, homodimer. It depends on pyridoxal 5'-phosphate as a cofactor.

The enzyme catalyses UDP-4-amino-4-deoxy-beta-L-arabinose + 2-oxoglutarate = UDP-beta-L-threo-pentopyranos-4-ulose + L-glutamate. It functions in the pathway nucleotide-sugar biosynthesis; UDP-4-deoxy-4-formamido-beta-L-arabinose biosynthesis; UDP-4-deoxy-4-formamido-beta-L-arabinose from UDP-alpha-D-glucuronate: step 2/3. It participates in bacterial outer membrane biogenesis; lipopolysaccharide biosynthesis. Catalyzes the conversion of UDP-4-keto-arabinose (UDP-Ara4O) to UDP-4-amino-4-deoxy-L-arabinose (UDP-L-Ara4N). The modified arabinose is attached to lipid A and is required for resistance to polymyxin and cationic antimicrobial peptides. This chain is UDP-4-amino-4-deoxy-L-arabinose--oxoglutarate aminotransferase, found in Edwardsiella ictaluri (strain 93-146).